We begin with the raw amino-acid sequence, 607 residues long: WD repeat-containing protein 1 (607 aa).

WD repeat units follow at residues 4–45, 48–87, 93–135, 138–176, 180–218, 224–263, 270–306, 311–351, 358–408, 432–474, 480–518, 523–561, and 566–604; these read ELKK…IRNI, PAIADIYTEHAHPVVVARYAPSGFYIASGDTSGKLRIWDT, LLKY…LWDT, SVGEISGNIKVINSVDIKQTRPYRLVTGSDDNCCAFFEG, KFKFTMADHSRFVNCVRFSPDGSRLASAGADGQIFLYDG, VGNLGGSKAHDGGIYAVSWSADSTQLLSASGDKTAKIWDV, TTFHLGTEVLDQQLGCLWQKDYLLSVSLSGYINYLDK, RPLR…YWDA, TFTG…KMDV, LKDK…LYSI, KDEGKSLPVKGAVTDLAYSHDGAFLAVTDANKVVTVFNV, SEQNVYYGHHAKAVSVAWSPDNEHFASSGMDMMVYVWTL, and ARIKIPDAHRLHHVSSLAWLDEHTLATVSHDACVKQWTV.

Belongs to the WD repeat AIP1 family.

Its subcellular location is the cell membrane. It is found in the cytoplasm. The protein localises to the cytoskeleton. It localises to the nucleus. Functionally, induces disassembly of actin filaments in conjunction with ADF/cofilin family proteins. Doesn't sever actin filaments alone, but caps the barbed ends of filaments severed by cofilin, which blocks annealing and depolymerization and allows more extensive severing by cofilin. The protein is WD repeat-containing protein 1 of Xenopus tropicalis (Western clawed frog).